The primary structure comprises 684 residues: DNA ligase (684 aa).

NAD(+) is bound by residues 48 to 52, 97 to 98, and E129; these read DYEYD and SL. K131 acts as the N6-AMP-lysine intermediate in catalysis. NAD(+) contacts are provided by R152, E189, K310, and K334. Zn(2+) contacts are provided by C429, C432, C447, and C452. Residues 609-684 form the BRCT domain; that stretch reads AQEGSLSGMS…ISWEELQAMI (76 aa).

It belongs to the NAD-dependent DNA ligase family. LigA subfamily. It depends on Mg(2+) as a cofactor. Requires Mn(2+) as cofactor.

It catalyses the reaction NAD(+) + (deoxyribonucleotide)n-3'-hydroxyl + 5'-phospho-(deoxyribonucleotide)m = (deoxyribonucleotide)n+m + AMP + beta-nicotinamide D-nucleotide.. Functionally, DNA ligase that catalyzes the formation of phosphodiester linkages between 5'-phosphoryl and 3'-hydroxyl groups in double-stranded DNA using NAD as a coenzyme and as the energy source for the reaction. It is essential for DNA replication and repair of damaged DNA. This Bdellovibrio bacteriovorus (strain ATCC 15356 / DSM 50701 / NCIMB 9529 / HD100) protein is DNA ligase.